We begin with the raw amino-acid sequence, 632 residues long: MSAADANQLQESLEKLNLDSAPAAAEEEAVAAESAPAGEEGADSANVAESTASLYVGELNTSVNEATLFEIFSPIGQVSSIRVCRDAVSKKSLGYAYVNYHKMEDGEKAIEELNYSPIEGRPCRIMWSQRDPSARRSGDGNIFIKNLHPAIDNKALHDTFSTFGKILSCKVATDDMGQSKCFGFVHYETAEAAEAAIENVNGMLLNDREVFVGKHISKKDRESKFEEIKANFTNIYVKNIDLEYSEEDLKKLFTPYGAITSIYLEKDAEGKSKGFGFVNYEGHEAAVKAVEELNDKEINGQKIYVGRAQKKRERMEELKKQYENTRLEKLSKYQGVNLFIKNLDDTIDSEKLEEEFKPFGTITSARVMVDETGKSKGFGFVCFSSPEEATKAITEMNQRMFFGKPLYVALAQRKDVRRSQLEQQIQARNQMRMQNAAATGGIPGQFIPPMFYGQQGFFPPNGRGNAPFPGPNPQMIMRRGQPFGGPEQWPRPGPNGQPVPVYGIPPQAYSDFNGQNIRQQRGYYPNRNQNKGRQQRDLAAIIASAPPDQQKRILGEELYPKIVATGKAQEPEAAGKITGMMLDLDNQEILALLEDDELFTNHFEDALTAFEEYKNSEAAAPVAPAAPAEPQA.

Over residues 1 to 11 (MSAADANQLQE) the composition is skewed to polar residues. Residues 1-43 (MSAADANQLQESLEKLNLDSAPAAAEEEAVAAESAPAGEEGAD) form a disordered region. Residues 31–43 (AAESAPAGEEGAD) are compositionally biased toward low complexity. 4 consecutive RRM domains span residues 52 to 130 (ASLY…WSQR), 140 to 217 (GNIF…KHIS), 233 to 310 (TNIY…RAQK), and 336 to 413 (VNLF…LAQR). A PABC domain is found at 534–615 (QQRDLAAIIA…ALTAFEEYKN (82 aa)).

The protein belongs to the polyadenylate-binding protein type-1 family.

It localises to the cytoplasm. The protein localises to the nucleus. Binds the poly(A) tail of mRNA. Appears to be an important mediator of the multiple roles of the poly(A) tail in mRNA biogenesis, stability and translation. In the nucleus, involved in both mRNA cleavage and polyadenylation. Is also required for efficient mRNA export to the cytoplasm. Acts in concert with a poly(A)-specific nuclease (PAN) to affect poly(A) tail shortening, which may occur concomitantly with either nucleocytoplasmic mRNA transport or translational initiation. In the cytoplasm, stimulates translation initiation and regulates mRNA decay through translation termination-coupled poly(A) shortening, probably mediated by PAN. The chain is Polyadenylate-binding protein, cytoplasmic and nuclear (PAB1) from Scheffersomyces stipitis (strain ATCC 58785 / CBS 6054 / NBRC 10063 / NRRL Y-11545) (Yeast).